The chain runs to 317 residues: Transaldolase (317 aa).

The active-site Schiff-base intermediate with substrate is Lys-132.

It belongs to the transaldolase family. Type 1 subfamily. As to quaternary structure, homodimer.

It is found in the cytoplasm. It carries out the reaction D-sedoheptulose 7-phosphate + D-glyceraldehyde 3-phosphate = D-erythrose 4-phosphate + beta-D-fructose 6-phosphate. It functions in the pathway carbohydrate degradation; pentose phosphate pathway; D-glyceraldehyde 3-phosphate and beta-D-fructose 6-phosphate from D-ribose 5-phosphate and D-xylulose 5-phosphate (non-oxidative stage): step 2/3. Functionally, transaldolase is important for the balance of metabolites in the pentose-phosphate pathway. The chain is Transaldolase from Shigella dysenteriae serotype 1 (strain Sd197).